Consider the following 1047-residue polypeptide: Ribonucleoside-diphosphate reductase subunit alpha (1047 aa).

ATP-cone domains lie at 9–111 (CTIV…KAHR), 118–219 (LSVI…ARVR), and 237–327 (FEVL…EALD). Substrate-binding positions include threonine 442, 457-458 (SC), glycine 486, 670-674 (NLCTE), and 857-861 (PTATI). Cysteine 458 and cysteine 687 are joined by a disulfide. The active-site Proton acceptor is the asparagine 670. Cysteine 672 (cysteine radical intermediate) is an active-site residue. The active-site Proton acceptor is the glutamate 674.

It belongs to the ribonucleoside diphosphate reductase large chain family. In terms of assembly, tetramer of two alpha and two beta subunits.

The enzyme catalyses a 2'-deoxyribonucleoside 5'-diphosphate + [thioredoxin]-disulfide + H2O = a ribonucleoside 5'-diphosphate + [thioredoxin]-dithiol. Under complex allosteric control mediated by deoxynucleoside triphosphates and ATP binding. The type of nucleotide bound at the specificity site determines substrate preference. It seems probable that ATP makes the enzyme reduce CDP and UDP, dGTP favors ADP reduction and dTTP favors GDP reduction. In terms of biological role, provides the precursors necessary for DNA synthesis. Catalyzes the biosynthesis of deoxyribonucleotides from the corresponding ribonucleotides. The chain is Ribonucleoside-diphosphate reductase subunit alpha (nrdA) from Chlamydia muridarum (strain MoPn / Nigg).